We begin with the raw amino-acid sequence, 79 residues long: Ornithine decarboxylase (79 aa).

Residues Ser-8, Gly-45, and 75–78 (EPGR) contribute to the pyridoxal 5'-phosphate site.

The protein belongs to the Orn/Lys/Arg decarboxylase class-II family. In terms of assembly, homodimer. Only the dimer is catalytically active, as the active sites are constructed of residues from both monomers. Pyridoxal 5'-phosphate serves as cofactor.

The protein resides in the cytoplasm. The enzyme catalyses L-ornithine + H(+) = putrescine + CO2. It functions in the pathway amine and polyamine biosynthesis; putrescine biosynthesis via L-ornithine pathway; putrescine from L-ornithine: step 1/1. Inhibited by antizyme (AZ) OAZ1 in response to polyamine levels. AZ inhibits the assembly of the functional homodimer by binding to ODC monomers and targeting them for ubiquitin-independent proteolytic destruction by the 26S proteasome. Catalyzes the first and rate-limiting step of polyamine biosynthesis that converts ornithine into putrescine, which is the precursor for the polyamines, spermidine and spermine. Polyamines are essential for cell proliferation and are implicated in cellular processes, ranging from DNA replication to apoptosis. The polypeptide is Ornithine decarboxylase (ODC) (Paracoccidioides brasiliensis).